The sequence spans 546 residues: DNA replication factor Cdt1 (546 aa).

The span at 1-11 (MEQRRVTDFFA) shows a compositional bias: basic and acidic residues. Residues 1 to 23 (MEQRRVTDFFARRRPGPPRIAPP) carry the PIP-box K+4 motif motif. Disordered regions lie at residues 1-118 (MEQR…QDQD) and 143-165 (SAQD…PCGE). A compositionally biased stretch (low complexity) spans 28–45 (RTPSPARPALRAPASATS). T29 is modified (phosphothreonine; by MAPK8). Residue S31 is modified to Phosphoserine. Residues 68–70 (RRL) carry the Cyclin-binding motif motif. Residue S93 is modified to Phosphoserine; by MAPK8. The interval 150-190 (SCTPEAEGRPEEPCGEKAPAYQRFHALAQPGLPGLVLPYKY) is interaction with GMNN. Basic and acidic residues predominate over residues 155–164 (AEGRPEEPCG). S318 is modified (phosphoserine; by MAPK8). Phosphoserine is present on residues S380 and S394. The interval 383–415 (ALRSAAPSSPGSPRPALPATPPATPPAASPSAL) is disordered. A compositionally biased stretch (pro residues) spans 392–410 (PGSPRPALPATPPATPPAA). The tract at residues 451 to 546 (LERLPELARV…AHQTRAEEGL (96 aa)) is interaction with LRWD1.

The protein belongs to the Cdt1 family. In terms of assembly, interacts with GMNN; the interaction inhibits binding of the MCM complex to origins of replication. Interacts with MCM6. Interacts with CDC6; are mutually dependent on one another for loading MCM complexes onto chromatin. Interacts with PCNA. Interacts with LRWD1 during G1 phase and during mitosis. Interacts with NDC80 subunit of the NDC80 complex; leading to kinetochore localization. Interacts with GRWD1; origin binding of GRWD1 is dependent on CDT1. Interacts with KAT7. Interacts with ubiquitin-binding protein FAF1; the interaction is likely to promote CDT1 degradation. Post-translationally, two independent E3 ubiquitin ligase complexes, SCF(SKP2) and the DCX(DTL) complex, mediated CDT1 degradation in S phase. Ubiquitinated by the DCX(DTL) complex, in response to DNA damage, leading to its degradation. Ubiquitination by the DCX(DTL) complex is necessary to ensure proper cell cycle regulation and is PCNA-dependent: interacts with PCNA via its PIP-box, while the presence of the containing the 'K+4' motif in the PIP box, recruit the DCX(DTL) complex, leading to its degradation. Phosphorylation at Thr-29 by CDK2 targets CDT1 for ubiquitination by SCF(SKP2) E3 ubiquitin ligase and subsequent degradation. The interaction with GMNN protects it against ubiquitination. Deubiquitinated by USP37. Ubiquitinated and degraded by the SCF(FBXO31) complex during the G2 phase to prevent re-replication. In terms of processing, phosphorylation by cyclin A-dependent kinases at Thr-29 targets CDT1 for ubiquitynation by SCF(SKP2) E3 ubiquitin ligase and subsequent degradation. Phosphorylated at Thr-29 by MAPK8/JNK1, which blocks replication licensing in response to stress. Binding to GMNN is not affected by phosphorylation.

Its subcellular location is the nucleus. The protein resides in the chromosome. The protein localises to the centromere. It localises to the kinetochore. Functionally, required for both DNA replication and mitosis. DNA replication licensing factor, required for pre-replication complex assembly. Cooperates with CDC6 and the origin recognition complex (ORC) during G1 phase of the cell cycle to promote the loading of the mini-chromosome maintenance (MCM) complex onto DNA to generate pre-replication complexes (pre-RC). Required also for mitosis by promoting stable kinetochore-microtubule attachments. Potential oncogene. The protein is DNA replication factor Cdt1 of Homo sapiens (Human).